We begin with the raw amino-acid sequence, 243 residues long: DNA repair protein RecO (243 aa).

Belongs to the RecO family.

Functionally, involved in DNA repair and RecF pathway recombination. The polypeptide is DNA repair protein RecO (Vibrio parahaemolyticus serotype O3:K6 (strain RIMD 2210633)).